A 573-amino-acid polypeptide reads, in one-letter code: Cytosolic 5'-nucleotidase 1B (573 aa).

Basic residues predominate over residues 1 to 11; sequence MSQTSLKHKKK. Disordered regions lie at residues 1-200 and 218-238; these read MSQT…PPTE and EPEY…EEDE. Residues 12–35 show a composition bias toward basic and acidic residues; it reads NEPGMRYSKESLDAEKRKDSDKTG. The span at 60–73 shows a compositional bias: polar residues; it reads NQWSRTSRSPSTGA. The span at 93–105 shows a compositional bias: low complexity; it reads SSTTSRTSSASPS. Over residues 115-136 the composition is skewed to polar residues; that stretch reads TSEKSSIQQTPQNRPITQLESQ. Basic and acidic residues-rich tracts occupy residues 161 to 174 and 182 to 194; these read WAHR…DLQL and DSRE…REYP. The active-site Nucleophile is the Asp428.

It belongs to the 5'-nucleotidase type 3 family. It depends on Mg(2+) as a cofactor. In terms of tissue distribution, expressed at highest levels in testis. Also expressed in brain, skeletal muscle, kidney and heart.

The protein localises to the cytoplasm. The catalysed reaction is a ribonucleoside 5'-phosphate + H2O = a ribonucleoside + phosphate. It carries out the reaction AMP + H2O = adenosine + phosphate. Its activity is regulated as follows. Activated by ADP. Its function is as follows. Catalyzes the hydrolysis of nucleotide monophosphates, releasing inorganic phosphate and the corresponding nucleoside, AMP is the major substrate. This chain is Cytosolic 5'-nucleotidase 1B (Nt5c1b), found in Mus musculus (Mouse).